A 683-amino-acid polypeptide reads, in one-letter code: uncharacterized protein (683 aa).

3 coiled-coil regions span residues 62–124 (PEHY…RKER), 155–259 (TTTN…KLSQ), and 346–376 (KKSL…DGDV). The segment at 213-237 (QDQVESQTGPKKRRKSPIENQPTAG) is disordered.

This is an uncharacterized protein from Invertebrate iridescent virus 3 (IIV-3).